Here is a 277-residue protein sequence, read N- to C-terminus: MSLAQQIEPPQADPGWSAHLQLRFIQREGVTRLGARRHVGPLLVQRPFYPEGAPCHVYVLHPPGGIVAGDRLELDIHLEAGSHALLTMPGASKFYRSIGPTAHLAQRFHLAAGSTLEWLPQDSIFFNGAQASLDSRFSVEPGARLLAWETLCLGRPVMGERFDQGAIDSRLCIDLPGEPGLHERLRIEGGRLDKVGGHPLVATFCATPADQAVLEQVRQQLEALDTPAGATLLGPLLVIRLLDHDNQHLQRNLQRLWHLLRPAVLGLAPCPPRIWAT.

It belongs to the UreD family. As to quaternary structure, ureD, UreF and UreG form a complex that acts as a GTP-hydrolysis-dependent molecular chaperone, activating the urease apoprotein by helping to assemble the nickel containing metallocenter of UreC. The UreE protein probably delivers the nickel.

It is found in the cytoplasm. Functionally, required for maturation of urease via the functional incorporation of the urease nickel metallocenter. The polypeptide is Urease accessory protein UreD (Pseudomonas entomophila (strain L48)).